A 599-amino-acid polypeptide reads, in one-letter code: Glucose-6-phosphate 1-dehydrogenase 3, chloroplastic (599 aa).

The span at 1-18 (MSSLSCPTYRSRTSSSSP) shows a compositional bias: low complexity. Positions 1–23 (MSSLSCPTYRSRTSSSSPFLSNH) are disordered. A chloroplast-targeting transit peptide spans 1-66 (MSSLSCPTYR…RSQRRSVQSS (66 aa)). Residue Val-67 is modified to N-acetylvaline. NADP(+)-binding positions include 119–126 (GASGDLAK) and Arg-153. Cysteines 171 and 179 form a disulfide. Lys-256 is an NADP(+) binding site. Residues Lys-256, 286-290 (HYLGK), Glu-324, and Asp-343 contribute to the D-glucose 6-phosphate site. The Proton acceptor role is filled by His-348. Position 441 (Lys-441) interacts with NADP(+). 2 residues coordinate D-glucose 6-phosphate: Lys-444 and Arg-449. Positions 454 and 483 each coordinate NADP(+). Position 485 (Gln-485) interacts with D-glucose 6-phosphate. NADP(+) is bound by residues 491–493 (YLK) and Arg-576.

Belongs to the glucose-6-phosphate dehydrogenase family. In terms of assembly, forms homodimer. Interacts with G6PD1. In terms of tissue distribution, expressed in roots, flowers and siliques.

It localises to the plastid. It is found in the chloroplast stroma. It catalyses the reaction D-glucose 6-phosphate + NADP(+) = 6-phospho-D-glucono-1,5-lactone + NADPH + H(+). Its pathway is carbohydrate degradation; pentose phosphate pathway; D-ribulose 5-phosphate from D-glucose 6-phosphate (oxidative stage): step 1/3. Its activity is regulated as follows. Regulated by metabolites. Post-translationally inactivated by cysteine-mediated redox modification via the ferredoxin-thioredoxin system in the light and this avoids futile cycles with photosynthetic CO2 fixation. Functionally, catalyzes the rate-limiting step of the oxidative pentose-phosphate pathway, which represents a route for the dissimilation of carbohydrates besides glycolysis. The main function of this enzyme is to provide reducing power (NADPH) and pentose phosphates for fatty acid and nucleic acid synthesis which are involved in membrane synthesis and cell division. The sequence is that of Glucose-6-phosphate 1-dehydrogenase 3, chloroplastic from Arabidopsis thaliana (Mouse-ear cress).